We begin with the raw amino-acid sequence, 182 residues long: Proline-rich protein, Y-linked (182 aa).

Disordered regions lie at residues 1-22 and 89-108; these read MMRR…KPRD and VPAD…PPPG. Positions 91–108 are enriched in pro residues; that stretch reads ADPPPASPYRTSPRPPPG. One can recognise a DUF1725 domain in the interval 154–167; that stretch reads WMKLETIILSKLSQ.

This chain is Proline-rich protein, Y-linked (PRORY), found in Homo sapiens (Human).